We begin with the raw amino-acid sequence, 228 residues long: Large ribosomal subunit protein uL4 (228 aa).

Disordered stretches follow at residues 45-102 and 208-228; these read GRQG…SQRT and PAKG…EANQ. Residues 208-221 show a composition bias toward low complexity; it reads PAKGKTAKAAATSG.

It belongs to the universal ribosomal protein uL4 family. Part of the 50S ribosomal subunit.

Functionally, one of the primary rRNA binding proteins, this protein initially binds near the 5'-end of the 23S rRNA. It is important during the early stages of 50S assembly. It makes multiple contacts with different domains of the 23S rRNA in the assembled 50S subunit and ribosome. Its function is as follows. Forms part of the polypeptide exit tunnel. This is Large ribosomal subunit protein uL4 from Saccharopolyspora erythraea (strain ATCC 11635 / DSM 40517 / JCM 4748 / NBRC 13426 / NCIMB 8594 / NRRL 2338).